The chain runs to 345 residues: Tubulin-folding cofactor C (345 aa).

Position 1 is an N-acetylmethionine (Met-1). Polar residues predominate over residues 1-10; it reads MEDDGQSSVA. A disordered region spans residues 1-83; that stretch reads MEDDGQSSVA…SRLASSSTDS (83 aa). The segment covering 23 to 39 has biased composition (basic and acidic residues); it reads DMLERLSARHQARKSDS. Low complexity predominate over residues 40 to 55; sequence PDSSSSSSSTLESTSS. Positions 61–73 are enriched in basic and acidic residues; sequence SDSKRSIESRIAE. The span at 74 to 83 shows a compositional bias: low complexity; it reads SRLASSSTDS. The C-CAP/cofactor C-like domain occupies 169–318; the sequence is PPKLVPVRDS…NWANVDDFRW (150 aa).

The protein belongs to the TBCC family. Supercomplex made of cofactors A to E. Cofactors A and D function by capturing and stabilizing tubulin in a quasi-native conformation. Cofactor E binds to the cofactor D-tubulin complex; interaction with cofactor C then causes the release of tubulin polypeptides that are committed to the native state. In terms of tissue distribution, ubiquitously expressed (at protein level). Present in leaves, roots, flowers, and stems.

It is found in the cytoplasm. Functionally, essential tubulin-folding protein involved in the final step of the tubulin folding pathway. Required for continuous microtubule cytoskeleton organization, mitotic division, cytokinesis, and to couple cell cycle progression to cell division in embryos and endosperms. Not essential for cell viability. Binds probably to the multimeric supercomplex, stimulating GTP hydrolysis by the bound beta-tubulin and the release of the alpha-/beta-tubulin heterodimer. In Arabidopsis thaliana (Mouse-ear cress), this protein is Tubulin-folding cofactor C (TFCC).